A 103-amino-acid chain; its full sequence is Large ribosomal subunit protein bL21 (103 aa).

The protein belongs to the bacterial ribosomal protein bL21 family. In terms of assembly, part of the 50S ribosomal subunit. Contacts protein L20.

Its function is as follows. This protein binds to 23S rRNA in the presence of protein L20. This is Large ribosomal subunit protein bL21 from Wolinella succinogenes (strain ATCC 29543 / DSM 1740 / CCUG 13145 / JCM 31913 / LMG 7466 / NCTC 11488 / FDC 602W) (Vibrio succinogenes).